A 453-amino-acid chain; its full sequence is uncharacterized protein (453 aa).

[4Fe-4S] cluster contacts are provided by cysteine 74, cysteine 80, cysteine 83, and cysteine 162. 4 residues coordinate S-adenosyl-L-methionine: glutamine 286, tyrosine 315, glutamate 336, and aspartate 384. Catalysis depends on cysteine 411, which acts as the Nucleophile.

The protein belongs to the class I-like SAM-binding methyltransferase superfamily. RNA M5U methyltransferase family.

This is an uncharacterized protein from Staphylococcus aureus (strain COL).